The sequence spans 615 residues: 1-deoxy-D-xylulose-5-phosphate synthase (615 aa).

Residues H72 and 111 to 113 contribute to the thiamine diphosphate site; that span reads GHS. Residue D142 participates in Mg(2+) binding. Thiamine diphosphate is bound by residues 143–144, N171, Y278, and E360; that span reads GA. Residue N171 participates in Mg(2+) binding.

The protein belongs to the transketolase family. DXPS subfamily. As to quaternary structure, homodimer. It depends on Mg(2+) as a cofactor. Thiamine diphosphate serves as cofactor.

The catalysed reaction is D-glyceraldehyde 3-phosphate + pyruvate + H(+) = 1-deoxy-D-xylulose 5-phosphate + CO2. The protein operates within metabolic intermediate biosynthesis; 1-deoxy-D-xylulose 5-phosphate biosynthesis; 1-deoxy-D-xylulose 5-phosphate from D-glyceraldehyde 3-phosphate and pyruvate: step 1/1. Functionally, catalyzes the acyloin condensation reaction between C atoms 2 and 3 of pyruvate and glyceraldehyde 3-phosphate to yield 1-deoxy-D-xylulose-5-phosphate (DXP). The protein is 1-deoxy-D-xylulose-5-phosphate synthase of Campylobacter jejuni subsp. jejuni serotype O:23/36 (strain 81-176).